A 307-amino-acid chain; its full sequence is Elongation factor Ts (307 aa).

The tract at residues Thr-80 to Val-83 is involved in Mg(2+) ion dislocation from EF-Tu.

It belongs to the EF-Ts family.

The protein resides in the cytoplasm. In terms of biological role, associates with the EF-Tu.GDP complex and induces the exchange of GDP to GTP. It remains bound to the aminoacyl-tRNA.EF-Tu.GTP complex up to the GTP hydrolysis stage on the ribosome. In Clostridium botulinum (strain Loch Maree / Type A3), this protein is Elongation factor Ts.